The sequence spans 87 residues: Small ribosomal subunit protein bS20 (87 aa).

The interval 1–22 (MANSPQAKKRARQNEKRFAINK) is disordered.

This sequence belongs to the bacterial ribosomal protein bS20 family.

In terms of biological role, binds directly to 16S ribosomal RNA. In Ruegeria sp. (strain TM1040) (Silicibacter sp.), this protein is Small ribosomal subunit protein bS20.